Consider the following 333-residue polypeptide: tRNA N6-adenosine threonylcarbamoyltransferase (333 aa).

2 residues coordinate Fe cation: H111 and H115. Residues 134 to 138 (LVSGG), D167, G180, and N272 contribute to the substrate site. D300 contacts Fe cation.

It belongs to the KAE1 / TsaD family. Fe(2+) is required as a cofactor.

The protein resides in the cytoplasm. The catalysed reaction is L-threonylcarbamoyladenylate + adenosine(37) in tRNA = N(6)-L-threonylcarbamoyladenosine(37) in tRNA + AMP + H(+). Functionally, required for the formation of a threonylcarbamoyl group on adenosine at position 37 (t(6)A37) in tRNAs that read codons beginning with adenine. Is involved in the transfer of the threonylcarbamoyl moiety of threonylcarbamoyl-AMP (TC-AMP) to the N6 group of A37, together with TsaE and TsaB. TsaD likely plays a direct catalytic role in this reaction. The polypeptide is tRNA N6-adenosine threonylcarbamoyltransferase (Hamiltonella defensa subsp. Acyrthosiphon pisum (strain 5AT)).